Here is a 338-residue protein sequence, read N- to C-terminus: MREPGFWHRPPSWLSRLLLPLGAVYGEITSWRMRKTGVEAGAPVICVGNYHLGGAGKTPTTLALVRLLRDLDEQPIVLSRGYGGRLKGPILVDPQRHDAADVGDEPLMMARRVPVVVARDRVDGAALARSQGASLLVMDDGFQNPALVKHLSLIVIDSRRGVGNGCVFPAGPLRAPLPLQIERTDALIIIGDGTAADEVAAAIATRGGVVLRARLRPDAASVERLKGQRVLAFAGIGDPARYFATLRASGIDVADQRAFADHHPFTVAELESLAETARREGLTLVTTEKDLARIGAAAATLGSAIVPFAVTLAVEDEPSLRLFLLEQINRARTKPRAG.

Residue 51–58 (HLGGAGKT) participates in ATP binding.

The protein belongs to the LpxK family.

The catalysed reaction is a lipid A disaccharide + ATP = a lipid IVA + ADP + H(+). It functions in the pathway glycolipid biosynthesis; lipid IV(A) biosynthesis; lipid IV(A) from (3R)-3-hydroxytetradecanoyl-[acyl-carrier-protein] and UDP-N-acetyl-alpha-D-glucosamine: step 6/6. Transfers the gamma-phosphate of ATP to the 4'-position of a tetraacyldisaccharide 1-phosphate intermediate (termed DS-1-P) to form tetraacyldisaccharide 1,4'-bis-phosphate (lipid IVA). The protein is Tetraacyldisaccharide 4'-kinase of Rhodopseudomonas palustris (strain HaA2).